The chain runs to 130 residues: L-ectoine synthase (130 aa).

It belongs to the ectoine synthase family.

It catalyses the reaction (2S)-4-acetamido-2-aminobutanoate = L-ectoine + H2O. Its pathway is amine and polyamine biosynthesis; ectoine biosynthesis; L-ectoine from L-aspartate 4-semialdehyde: step 3/3. Its function is as follows. Catalyzes the circularization of gamma-N-acetyl-alpha,gamma-diaminobutyric acid (ADABA) to ectoine (1,4,5,6-tetrahydro-2-methyl-4-pyrimidine carboxylic acid), which is an excellent osmoprotectant. The polypeptide is L-ectoine synthase (Mycolicibacterium vanbaalenii (strain DSM 7251 / JCM 13017 / BCRC 16820 / KCTC 9966 / NRRL B-24157 / PYR-1) (Mycobacterium vanbaalenii)).